A 117-amino-acid chain; its full sequence is Immunoglobulin kappa variable 1-39 (117 aa).

Residues 1-22 form the signal peptide; that stretch reads MDMRVPAQLLGLLLLWLRGARC. A framework-1 region spans residues 23-45; that stretch reads DIQMTQSPSSLSASVGDRVTITC. Residues 24–117 enclose the Ig-like domain; sequence IQMTQSPSSL…YYCQQSYSTP (94 aa). Cysteines 45 and 110 form a disulfide. A complementarity-determining-1 region spans residues 46 to 56; it reads RASQSISSYLN. The segment at 57–71 is framework-2; the sequence is WYQQKPGKAPKLLIY. The complementarity-determining-2 stretch occupies residues 72-78; the sequence is AASSLQS. The framework-3 stretch occupies residues 79–110; that stretch reads GVPSRFSGSGSGTDFTLTISSLQPEDFATYYC. Residues 111–117 are complementarity-determining-3; it reads QQSYSTP.

Immunoglobulins are composed of two identical heavy chains and two identical light chains; disulfide-linked.

Its subcellular location is the secreted. The protein resides in the cell membrane. Its function is as follows. V region of the variable domain of immunoglobulin light chains that participates in the antigen recognition. Immunoglobulins, also known as antibodies, are membrane-bound or secreted glycoproteins produced by B lymphocytes. In the recognition phase of humoral immunity, the membrane-bound immunoglobulins serve as receptors which, upon binding of a specific antigen, trigger the clonal expansion and differentiation of B lymphocytes into immunoglobulins-secreting plasma cells. Secreted immunoglobulins mediate the effector phase of humoral immunity, which results in the elimination of bound antigens. The antigen binding site is formed by the variable domain of one heavy chain, together with that of its associated light chain. Thus, each immunoglobulin has two antigen binding sites with remarkable affinity for a particular antigen. The variable domains are assembled by a process called V-(D)-J rearrangement and can then be subjected to somatic hypermutations which, after exposure to antigen and selection, allow affinity maturation for a particular antigen. The chain is Immunoglobulin kappa variable 1-39 from Homo sapiens (Human).